A 258-amino-acid polypeptide reads, in one-letter code: UPF0246 protein YaaA (258 aa).

This sequence belongs to the UPF0246 family.

The sequence is that of UPF0246 protein YaaA from Escherichia coli (strain UTI89 / UPEC).